Consider the following 420-residue polypeptide: CinA-like protein (420 aa).

Belongs to the CinA family.

The chain is CinA-like protein from Syntrophus aciditrophicus (strain SB).